The following is a 469-amino-acid chain: Glutamate--tRNA ligase (469 aa).

The 'HIGH' region motif lies at 9–19 (PSPTGFLHVGG). The short motif at 236–240 (KLSKR) is the 'KMSKS' region element. Lys239 lines the ATP pocket.

This sequence belongs to the class-I aminoacyl-tRNA synthetase family. Glutamate--tRNA ligase type 1 subfamily. As to quaternary structure, monomer.

The protein resides in the cytoplasm. The catalysed reaction is tRNA(Glu) + L-glutamate + ATP = L-glutamyl-tRNA(Glu) + AMP + diphosphate. In terms of biological role, catalyzes the attachment of glutamate to tRNA(Glu) in a two-step reaction: glutamate is first activated by ATP to form Glu-AMP and then transferred to the acceptor end of tRNA(Glu). This is Glutamate--tRNA ligase from Shewanella amazonensis (strain ATCC BAA-1098 / SB2B).